Reading from the N-terminus, the 506-residue chain is Cytochrome P450 6a2 (506 aa).

Cys451 is a heme binding site.

This sequence belongs to the cytochrome P450 family. Heme serves as cofactor.

It is found in the endoplasmic reticulum membrane. The protein resides in the microsome membrane. Is involved in the breakdown of synthetic insecticides and may be involved in the metabolism of insect hormones. The chain is Cytochrome P450 6a2 (Cyp6a2) from Drosophila melanogaster (Fruit fly).